A 435-amino-acid chain; its full sequence is Mitochondrial association factor 1 form b0 (435 aa).

An N-terminal signal peptide occupies residues 1–27 (MWRIWRCRLSFLFVTGCLLGALTAGLG). The Vacuolar segment spans residues 28-96 (SQMSDSVGRN…VTARRRRNRR (69 aa)). The tract at residues 43 to 89 (GVADASQEAGDVVEERTERTEEQVFAPGPPRRHSSESLFPRNPSVTA) is disordered. Over residues 55–64 (VEERTERTEE) the composition is skewed to basic and acidic residues. Residues 97–117 (ITLIATAVGVAVILAALYVLR) traverse the membrane as a helical segment. Over 118–435 (RRRAQPPQEP…ESTYLASMLD (318 aa)) the chain is Cytoplasmic. Residues 120–162 (RAQPPQEPEPPTRLRTPRPRAPSGQQQPSESEPPAGVPMKPGS) are disordered.

The protein localises to the parasitophorous vacuole membrane. Its function is as follows. During host cell infection by tachyzoites, does not play a role in tethering the parasitophorous vacuole to the host mitochondria. The chain is Mitochondrial association factor 1 form b0 from Toxoplasma gondii.